A 161-amino-acid chain; its full sequence is Cell division protein SepF (161 aa).

It belongs to the SepF family. As to quaternary structure, homodimer. Interacts with FtsZ.

It localises to the cytoplasm. Functionally, cell division protein that is part of the divisome complex and is recruited early to the Z-ring. Probably stimulates Z-ring formation, perhaps through the cross-linking of FtsZ protofilaments. Its function overlaps with FtsA. The chain is Cell division protein SepF from Finegoldia magna (strain ATCC 29328 / DSM 20472 / WAL 2508) (Peptostreptococcus magnus).